A 377-amino-acid chain; its full sequence is 3-dehydroquinate synthase (377 aa).

NAD(+) is bound by residues 113-117, 137-138, Lys-150, Lys-159, and 177-180; these read GVIGD, TT, and FLDT. Glu-192, His-254, and His-273 together coordinate Zn(2+).

Belongs to the sugar phosphate cyclases superfamily. Dehydroquinate synthase family. Co(2+) is required as a cofactor. Requires Zn(2+) as cofactor. The cofactor is NAD(+).

It localises to the cytoplasm. It carries out the reaction 7-phospho-2-dehydro-3-deoxy-D-arabino-heptonate = 3-dehydroquinate + phosphate. Its pathway is metabolic intermediate biosynthesis; chorismate biosynthesis; chorismate from D-erythrose 4-phosphate and phosphoenolpyruvate: step 2/7. In terms of biological role, catalyzes the conversion of 3-deoxy-D-arabino-heptulosonate 7-phosphate (DAHP) to dehydroquinate (DHQ). This chain is 3-dehydroquinate synthase, found in Bartonella quintana (strain Toulouse) (Rochalimaea quintana).